We begin with the raw amino-acid sequence, 392 residues long: Lipid-A-disaccharide synthase (392 aa).

This sequence belongs to the LpxB family.

The catalysed reaction is a lipid X + a UDP-2-N,3-O-bis[(3R)-3-hydroxyacyl]-alpha-D-glucosamine = a lipid A disaccharide + UDP + H(+). Its pathway is bacterial outer membrane biogenesis; LPS lipid A biosynthesis. Functionally, condensation of UDP-2,3-diacylglucosamine and 2,3-diacylglucosamine-1-phosphate to form lipid A disaccharide, a precursor of lipid A, a phosphorylated glycolipid that anchors the lipopolysaccharide to the outer membrane of the cell. This is Lipid-A-disaccharide synthase from Bradyrhizobium diazoefficiens (strain JCM 10833 / BCRC 13528 / IAM 13628 / NBRC 14792 / USDA 110).